The primary structure comprises 222 residues: Phosphoribosylformylglycinamidine synthase subunit PurQ (222 aa).

A Glutamine amidotransferase type-1 domain is found at 3 to 222 (AAVVVFPGSN…RALTGALAAV (220 aa)). Cys-86 acts as the Nucleophile in catalysis. Active-site residues include His-194 and Glu-196.

As to quaternary structure, part of the FGAM synthase complex composed of 1 PurL, 1 PurQ and 2 PurS subunits.

Its subcellular location is the cytoplasm. The enzyme catalyses N(2)-formyl-N(1)-(5-phospho-beta-D-ribosyl)glycinamide + L-glutamine + ATP + H2O = 2-formamido-N(1)-(5-O-phospho-beta-D-ribosyl)acetamidine + L-glutamate + ADP + phosphate + H(+). It carries out the reaction L-glutamine + H2O = L-glutamate + NH4(+). It functions in the pathway purine metabolism; IMP biosynthesis via de novo pathway; 5-amino-1-(5-phospho-D-ribosyl)imidazole from N(2)-formyl-N(1)-(5-phospho-D-ribosyl)glycinamide: step 1/2. Its function is as follows. Part of the phosphoribosylformylglycinamidine synthase complex involved in the purines biosynthetic pathway. Catalyzes the ATP-dependent conversion of formylglycinamide ribonucleotide (FGAR) and glutamine to yield formylglycinamidine ribonucleotide (FGAM) and glutamate. The FGAM synthase complex is composed of three subunits. PurQ produces an ammonia molecule by converting glutamine to glutamate. PurL transfers the ammonia molecule to FGAR to form FGAM in an ATP-dependent manner. PurS interacts with PurQ and PurL and is thought to assist in the transfer of the ammonia molecule from PurQ to PurL. The chain is Phosphoribosylformylglycinamidine synthase subunit PurQ from Roseobacter denitrificans (strain ATCC 33942 / OCh 114) (Erythrobacter sp. (strain OCh 114)).